Here is a 305-residue protein sequence, read N- to C-terminus: MLWFKNVMIYRLNRPIELSVEQIEQQLSAFAFTPCGSQDMAKSGWVPPMGAKSDALTHSIPGHVLLCLRKEEKILPSSVVKQELEGKISKLENDQSRKLRKTDKDALKDELLHQLMPRAFSRFGQTLLWLDLANDLVLVDAGSARKAEDCLAMLRKSIGSLPVVPLTMEKPIEMTLTEWVRSGEPAAGFAIQDEAELKVLLEEGGILRCKKQDLSSDEIAVHIEAGKLVTKLALDWRERVQFLLGDDGTVKRLKFSDTLREQNDDIDREDFAARFDADFLLMTGELTGLIAELIAGLGGEAPRQG.

This sequence belongs to the RdgC family.

Its subcellular location is the cytoplasm. The protein resides in the nucleoid. Its function is as follows. May be involved in recombination. The sequence is that of Recombination-associated protein RdgC from Sodalis glossinidius (strain morsitans).